Here is a 179-residue protein sequence, read N- to C-terminus: Large ribosomal subunit protein uL5 (179 aa).

Belongs to the universal ribosomal protein uL5 family. Part of the 50S ribosomal subunit; part of the 5S rRNA/L5/L18/L25 subcomplex. Contacts the 5S rRNA and the P site tRNA. Forms a bridge to the 30S subunit in the 70S ribosome.

In terms of biological role, this is one of the proteins that bind and probably mediate the attachment of the 5S RNA into the large ribosomal subunit, where it forms part of the central protuberance. In the 70S ribosome it contacts protein S13 of the 30S subunit (bridge B1b), connecting the 2 subunits; this bridge is implicated in subunit movement. Contacts the P site tRNA; the 5S rRNA and some of its associated proteins might help stabilize positioning of ribosome-bound tRNAs. The polypeptide is Large ribosomal subunit protein uL5 (Shewanella pealeana (strain ATCC 700345 / ANG-SQ1)).